The primary structure comprises 232 residues: Small ribosomal subunit protein uS2 (232 aa).

It belongs to the universal ribosomal protein uS2 family.

This is Small ribosomal subunit protein uS2 from Pelotomaculum thermopropionicum (strain DSM 13744 / JCM 10971 / SI).